Here is a 379-residue protein sequence, read N- to C-terminus: Reducing end xylose-releasing exo-oligoxylanase (379 aa).

Glutamate 66 serves as the catalytic Proton donor. Catalysis depends on aspartate 259, which acts as the Proton acceptor.

Belongs to the glycosyl hydrolase 8 (cellulase D) family.

The enzyme catalyses Hydrolysis of (1-&gt;4)-beta-D-xylose residues from the reducing end of oligosaccharides.. In terms of biological role, hydrolyzes xylooligosaccharides with a degree of polymerization of greater than or equal to 3, releasing xylose from the reducing end. Has low activity on birchwood xylan, oat spelt xylan and arabinoxylan. The sequence is that of Reducing end xylose-releasing exo-oligoxylanase from Bifidobacterium adolescentis (strain ATCC 15703 / DSM 20083 / NCTC 11814 / E194a).